The sequence spans 511 residues: Histidine ammonia-lyase (511 aa).

A cross-link (5-imidazolinone (Ala-Gly)) is located at residues 142–144 (ASG). Serine 143 is modified (2,3-didehydroalanine (Ser)).

This sequence belongs to the PAL/histidase family. In terms of processing, contains an active site 4-methylidene-imidazol-5-one (MIO), which is formed autocatalytically by cyclization and dehydration of residues Ala-Ser-Gly.

The protein localises to the cytoplasm. It catalyses the reaction L-histidine = trans-urocanate + NH4(+). It participates in amino-acid degradation; L-histidine degradation into L-glutamate; N-formimidoyl-L-glutamate from L-histidine: step 1/3. The sequence is that of Histidine ammonia-lyase from Caulobacter sp. (strain K31).